Here is a 345-residue protein sequence, read N- to C-terminus: Tyrosine-binding protein (345 aa).

Residues 1-23 (MIKSKKILSLIIAGVLGVSMLTG) form the signal peptide. Cys24 is lipidated: N-palmitoyl cysteine. The S-diacylglycerol cysteine moiety is linked to residue Cys24.

In terms of assembly, the complex is probably composed of two ATP-binding proteins (CDR20291_0806), two transmembrane proteins (CDR20291_0807) and a solute-binding protein (CDR20291_0805).

It is found in the cell membrane. Functionally, probably part of an ABC transporter complex involved in tyrosine uptake. May also import phenylalanine. This Clostridioides difficile (strain R20291) (Peptoclostridium difficile) protein is Tyrosine-binding protein.